The following is a 756-amino-acid chain: ATP-dependent DNA helicase Hel308 (756 aa).

Residues Gln29 and 47 to 54 (SATASGKT) each bind ATP. Positions 34–201 (RAGLLNGENI…WLNAKLVKSD (168 aa)) constitute a Helicase ATP-binding domain. The DEAH box motif lies at 146–149 (DEIH). The 203-residue stretch at 233-435 (SLINLTVDTL…PTSLKFHTLS (203 aa)) folds into the Helicase C-terminal domain.

This sequence belongs to the helicase family. Hel308 subfamily. Monomer.

The catalysed reaction is Couples ATP hydrolysis with the unwinding of duplex DNA by translocating in the 3'-5' direction.. The enzyme catalyses ATP + H2O = ADP + phosphate + H(+). Functionally, DNA-dependent ATPase and 3'-5' DNA helicase that may be involved in repair of stalled replication forks. This chain is ATP-dependent DNA helicase Hel308, found in Caldivirga maquilingensis (strain ATCC 700844 / DSM 13496 / JCM 10307 / IC-167).